Here is a 239-residue protein sequence, read N- to C-terminus: MSRAPFIVPALKKHTATVIMAHGLGDSGAGWVSLAHNWRRRGLFEEVTFIFPNAPMIPITVNFGMSMPGWYDITKLGRDLDFQEAVKNQDEAGILKSRDYFNSLIKEQMDQGIKPSRIVLGGFSQGGAMSLFSGITGQEKLGGVFGLSCYMLLSDRIKNYIPENFPNKKTPFFLAHGTEDDIVPHEFGKRSAEMAKELGLEDVTFNSYKYLSHSADPVEIEDLEKFLDRVIPAENGGSL.

Catalysis depends on charge relay system residues Ser-124, Asp-180, and His-213.

It belongs to the AB hydrolase superfamily. AB hydrolase 2 family.

Its subcellular location is the cytoplasm. The protein resides in the nucleus. It catalyses the reaction S-hexadecanoyl-L-cysteinyl-[protein] + H2O = L-cysteinyl-[protein] + hexadecanoate + H(+). Hydrolyzes fatty acids from S-acylated cysteine residues in proteins with a strong preference for palmitoylated G-alpha proteins over other acyl substrates. Mediates the deacylation of G-alpha proteins such as GPA1 in vivo, but has weak or no activity toward palmitoylated Ras proteins. Has weak lysophospholipase activity in vitro; however such activity may not exist in vivo. The polypeptide is Acyl-protein thioesterase 1 (Emericella nidulans (strain FGSC A4 / ATCC 38163 / CBS 112.46 / NRRL 194 / M139) (Aspergillus nidulans)).